A 146-amino-acid chain; its full sequence is Hemoglobin subunit beta-A/B (146 aa).

G1 is subject to N-acetylserine; in variant beta-B. A Globin domain is found at 2 to 146 (FLTAEEKGLV…VANALAHKYH (145 aa)). S44 is modified (phosphoserine). Residue K59 is modified to N6-acetyllysine. H63 contacts heme b. K82 is subject to N6-acetyllysine. H92 serves as a coordination point for heme b. Residue C93 is modified to S-nitrosocysteine. An N6-acetyllysine modification is found at K144.

The protein belongs to the globin family. As to quaternary structure, heterotetramer of two alpha chains and two beta chains. In terms of tissue distribution, red blood cells.

In terms of biological role, involved in oxygen transport from the lung to the various peripheral tissues. This Felis catus (Cat) protein is Hemoglobin subunit beta-A/B (HBB).